The primary structure comprises 351 residues: uncharacterized protein (351 aa).

The protein belongs to the bacterial luciferase oxidoreductase family.

This is an uncharacterized protein from Sinorhizobium fredii (strain NBRC 101917 / NGR234).